A 240-amino-acid polypeptide reads, in one-letter code: Dihydromonapterin reductase (240 aa).

The active-site Proton acceptor is the Tyr-152.

Belongs to the short-chain dehydrogenases/reductases (SDR) family. FolM subfamily.

The enzyme catalyses (6S)-5,6,7,8-tetrahydrofolate + NADP(+) = 7,8-dihydrofolate + NADPH + H(+). It carries out the reaction 7,8-dihydromonapterin + NADPH + H(+) = 5,6,7,8-tetrahydromonapterin + NADP(+). In terms of biological role, catalyzes the reduction of dihydromonapterin to tetrahydromonapterin. Also has lower activity with dihydrofolate. This Escherichia coli O1:K1 / APEC protein is Dihydromonapterin reductase (folM).